Here is a 166-residue protein sequence, read N- to C-terminus: Peptidyl-prolyl cis-trans isomerase-like 1 (166 aa).

Positions glutamine 10–proline 164 constitute a PPIase cyclophilin-type domain. Cyclosporin A contacts are provided by residues histidine 54 to glycine 65, threonine 70 to glycine 71, alanine 99 to glycine 104, glycine 109 to phenylalanine 113, threonine 119, and lysine 125. Residue serine 149 is modified to Phosphoserine.

Belongs to the cyclophilin-type PPIase family. PPIL1 subfamily. Identified in the spliceosome C complex. Interacts with SNW1/SKIP. Interacts with CDC40/PRP17; this interaction leads to CDC40 isomerization. Interacts with RBM22.

Its subcellular location is the nucleus. It catalyses the reaction [protein]-peptidylproline (omega=180) = [protein]-peptidylproline (omega=0). With respect to regulation, inhibited by Cyclosporin A. Functionally, involved in pre-mRNA splicing as component of the spliceosome. PPIases accelerate the folding of proteins. It catalyzes the cis-trans isomerization of proline imidic peptide bonds in oligopeptides. Catalyzes prolyl peptide bond isomerization in CDC40/PRP17. Plays an important role in embryonic brain development; this function is independent of its isomerase activity. The chain is Peptidyl-prolyl cis-trans isomerase-like 1 (Ppil1) from Mus musculus (Mouse).